Reading from the N-terminus, the 56-residue chain is Small ribosomal subunit protein uS14 (56 aa).

Zn(2+) contacts are provided by cysteine 21, cysteine 24, cysteine 39, and cysteine 42.

This sequence belongs to the universal ribosomal protein uS14 family. In terms of assembly, component of the 40S small ribosomal subunit. Requires Zn(2+) as cofactor.

It localises to the cytoplasm. The protein localises to the cytosol. Its subcellular location is the rough endoplasmic reticulum. Its function is as follows. Component of the small ribosomal subunit. The ribosome is a large ribonucleoprotein complex responsible for the synthesis of proteins in the cell. This Hippocampus comes (Tiger tail seahorse) protein is Small ribosomal subunit protein uS14 (rps29).